The primary structure comprises 492 residues: Serine incorporator 4 (492 aa).

10 consecutive transmembrane segments (helical) span residues 59–79 (YILL…KTVV), 113–133 (AVYR…VLLV), 148–168 (SFWS…FCIP), 179–199 (IGIC…TAFA), 219–239 (GVSL…VLLF), 254–274 (LLSL…APCI), 281–301 (SGLL…FSAL), 330–350 (IPDT…VLFA), 421–441 (GFHF…TNWF), and 464–484 (VASC…PLLA).

This sequence belongs to the TDE1 family.

The protein localises to the membrane. Its function is as follows. Incorporates a polar amino acid serine into membranes and facilitates the synthesis of two serine-derived lipids, phosphatidylserine and sphingolipids. This is Serine incorporator 4 (Serinc4) from Mus musculus (Mouse).